The sequence spans 386 residues: 2,3-diketo-5-methylthiopentyl-1-phosphate enolase (386 aa).

The Proton acceptor role is filled by Lys-85. Residues Lys-131, 157-160, His-248, Gly-316, and 338-339 each bind substrate; these read KDDE and GT. Lys-157, Asp-159, and Glu-160 together coordinate Mg(2+). Lys-157 carries the N6-carboxylysine modification.

Belongs to the RuBisCO large chain family. Type IV subfamily. Homodimer. It depends on Mg(2+) as a cofactor.

The catalysed reaction is 5-methylsulfanyl-2,3-dioxopentyl phosphate = 2-hydroxy-5-methylsulfanyl-3-oxopent-1-enyl phosphate. The protein operates within amino-acid biosynthesis; L-methionine biosynthesis via salvage pathway; L-methionine from S-methyl-5-thio-alpha-D-ribose 1-phosphate: step 3/6. Functionally, catalyzes the enolization of 2,3-diketo-5-methylthiopentyl-1-phosphate (DK-MTP-1-P) into 2-hydroxy-3-keto-5-methylthiopentenyl-1-phosphate (HK-MTPenyl-1-P). This Microcystis aeruginosa (strain NIES-843 / IAM M-2473) protein is 2,3-diketo-5-methylthiopentyl-1-phosphate enolase.